The sequence spans 546 residues: Chaperonin GroEL 1 (546 aa).

ATP is bound by residues 30–33 (TLGP), lysine 51, 87–91 (DGTTT), glycine 415, 479–481 (NAA), and aspartate 495.

Belongs to the chaperonin (HSP60) family. As to quaternary structure, forms a cylinder of 14 subunits composed of two heptameric rings stacked back-to-back. Interacts with the co-chaperonin GroES.

It localises to the cytoplasm. The catalysed reaction is ATP + H2O + a folded polypeptide = ADP + phosphate + an unfolded polypeptide.. Functionally, together with its co-chaperonin GroES, plays an essential role in assisting protein folding. The GroEL-GroES system forms a nano-cage that allows encapsulation of the non-native substrate proteins and provides a physical environment optimized to promote and accelerate protein folding. The protein is Chaperonin GroEL 1 of Vibrio vulnificus (strain CMCP6).